Consider the following 355-residue polypeptide: Serpentine receptor class epsilon-1 (355 aa).

7 helical membrane passes run F28–I48, L56–I76, I102–V122, I144–L164, V172–F192, V232–S252, and F268–S288.

It belongs to the nematode receptor-like protein sre family.

Its subcellular location is the membrane. The protein is Serpentine receptor class epsilon-1 (sre-1) of Caenorhabditis elegans.